Here is a 292-residue protein sequence, read N- to C-terminus: Insulin-like growth factor-binding protein 3 (292 aa).

The first 27 residues, 1–27 (MHPARPALWAAALTALTLLRGPPVARA), serve as a signal peptide directing secretion. The IGFBP N-terminal domain occupies 36-119 (PVVRCEPCDA…LNGRGFCANA (84 aa)). 6 disulfides stabilise this stretch: Cys40–Cys69, Cys43–Cys71, Cys51–Cys72, Cys60–Cys75, Cys83–Cys96, and Cys90–Cys116. N-linked (GlcNAc...) asparagine glycans are attached at residues Asn118 and Asn137. Disordered regions lie at residues 128 to 152 (YLPSQPAPGNISESEEEHNAGSVES) and 178 to 212 (KGHARDSQRYKVDYESQSTDTQNFSSESKRETEYG). Ser149 is modified (phosphoserine). Residues 178-191 (KGHARDSQRYKVDY) are compositionally biased toward basic and acidic residues. Over residues 192-203 (ESQSTDTQNFSS) the composition is skewed to polar residues. Asn200 carries an N-linked (GlcNAc...) asparagine glycan. Ser202 is modified (phosphoserine). The Thyroglobulin type-1 domain maps to 211–286 (YGPCRREMED…DTKGKDDVHC (76 aa)). 3 disulfide bridges follow: Cys214–Cys241, Cys252–Cys263, and Cys265–Cys286.

Interacts with XLKD1. Binds IGF2 more than IGF1. Forms a ternary complex of about 140 to 150 kDa with IGF1 or IGF2 and a 85 kDa glycoprotein (ALS). Interacts with TMEM219. Phosphorylated by FAM20C in the extracellular medium.

The protein resides in the secreted. Its function is as follows. IGF-binding proteins prolong the half-life of the IGFs and have been shown to either inhibit or stimulate the growth promoting effects of the IGFs on cell culture. They alter the interaction of IGFs with their cell surface receptors. Also exhibits IGF-independent antiproliferative and apoptotic effects mediated by its receptor TMEM219/IGFBP-3R. Promotes testicular germ cell apoptosis. The polypeptide is Insulin-like growth factor-binding protein 3 (Igfbp3) (Mus musculus (Mouse)).